The sequence spans 83 residues: Putative membrane protein insertion efficiency factor (83 aa).

The interval 62 to 83 is disordered; sequence KGGYDPVPPKSVKSAGNSKDSK.

This sequence belongs to the UPF0161 family.

Its subcellular location is the cell inner membrane. Functionally, could be involved in insertion of integral membrane proteins into the membrane. This Chlorobaculum tepidum (strain ATCC 49652 / DSM 12025 / NBRC 103806 / TLS) (Chlorobium tepidum) protein is Putative membrane protein insertion efficiency factor.